The sequence spans 78 residues: Putative membrane protein insertion efficiency factor (78 aa).

Belongs to the UPF0161 family.

The protein localises to the cell inner membrane. Could be involved in insertion of integral membrane proteins into the membrane. The protein is Putative membrane protein insertion efficiency factor of Roseobacter denitrificans (strain ATCC 33942 / OCh 114) (Erythrobacter sp. (strain OCh 114)).